We begin with the raw amino-acid sequence, 205 residues long: High frequency lysogenization protein HflD homolog (205 aa).

It belongs to the HflD family.

The protein resides in the cytoplasm. It localises to the cell inner membrane. This Haemophilus influenzae (strain PittEE) protein is High frequency lysogenization protein HflD homolog.